Consider the following 513-residue polypeptide: ATP synthase subunit alpha (513 aa).

ATP is bound at residue 169 to 176; that stretch reads GDRQTGKT.

This sequence belongs to the ATPase alpha/beta chains family. As to quaternary structure, F-type ATPases have 2 components, CF(1) - the catalytic core - and CF(0) - the membrane proton channel. CF(1) has five subunits: alpha(3), beta(3), gamma(1), delta(1), epsilon(1). CF(0) has three main subunits: a(1), b(2) and c(9-12). The alpha and beta chains form an alternating ring which encloses part of the gamma chain. CF(1) is attached to CF(0) by a central stalk formed by the gamma and epsilon chains, while a peripheral stalk is formed by the delta and b chains.

Its subcellular location is the cell inner membrane. It carries out the reaction ATP + H2O + 4 H(+)(in) = ADP + phosphate + 5 H(+)(out). In terms of biological role, produces ATP from ADP in the presence of a proton gradient across the membrane. The alpha chain is a regulatory subunit. The sequence is that of ATP synthase subunit alpha from Haemophilus influenzae (strain PittEE).